Consider the following 869-residue polypeptide: Aminopeptidase N (869 aa).

Substrate contacts are provided by residues glutamate 122 and 262 to 266 (GAMEN). Histidine 298 contacts Zn(2+). The active-site Proton acceptor is glutamate 299. Zn(2+) is bound by residues histidine 302 and glutamate 321.

It belongs to the peptidase M1 family. Zn(2+) is required as a cofactor.

It localises to the cell inner membrane. It catalyses the reaction Release of an N-terminal amino acid, Xaa-|-Yaa- from a peptide, amide or arylamide. Xaa is preferably Ala, but may be most amino acids including Pro (slow action). When a terminal hydrophobic residue is followed by a prolyl residue, the two may be released as an intact Xaa-Pro dipeptide.. Aminopeptidase N is involved in the degradation of intracellular peptides generated by protein breakdown during normal growth as well as in response to nutrient starvation. In Haemophilus influenzae (strain ATCC 51907 / DSM 11121 / KW20 / Rd), this protein is Aminopeptidase N (pepN).